Consider the following 257-residue polypeptide: Ditrans,polycis-undecaprenyl-diphosphate synthase ((2E,6E)-farnesyl-diphosphate specific) (257 aa).

The active site involves Asp-23. Mg(2+) is bound at residue Asp-23. Residues 24–27, Trp-28, Arg-36, His-40, and 68–70 contribute to the substrate site; these read GNGR and SSE. Catalysis depends on Asn-71, which acts as the Proton acceptor. Substrate is bound by residues Trp-72, Arg-74, Arg-191, and 197–199; that span reads RIS. Position 210 (Glu-210) interacts with Mg(2+).

Belongs to the UPP synthase family. Homodimer. Mg(2+) is required as a cofactor.

It carries out the reaction 8 isopentenyl diphosphate + (2E,6E)-farnesyl diphosphate = di-trans,octa-cis-undecaprenyl diphosphate + 8 diphosphate. Catalyzes the sequential condensation of isopentenyl diphosphate (IPP) with (2E,6E)-farnesyl diphosphate (E,E-FPP) to yield (2Z,6Z,10Z,14Z,18Z,22Z,26Z,30Z,34E,38E)-undecaprenyl diphosphate (di-trans,octa-cis-UPP). UPP is the precursor of glycosyl carrier lipid in the biosynthesis of bacterial cell wall polysaccharide components such as peptidoglycan and lipopolysaccharide. This Xanthomonas axonopodis pv. citri (strain 306) protein is Ditrans,polycis-undecaprenyl-diphosphate synthase ((2E,6E)-farnesyl-diphosphate specific).